The following is a 171-amino-acid chain: MAGSLVESEALQMGVRRLSSPLTSPVQAEVYFPRLTVPFCGHIKGGMRPGKKILIMGIVNLEPKSFDIRLTCGDSEDPAADIAIELRAEFADKQLLRNACVSGKWGEEESAIPYFPFIADQPFRVEIHCEHPRLRIFVDGHQLFDFYHRVETLSAINTIKINGDLQLTKLG.

A Galectin domain is found at 38-170 (PFCGHIKGGM…INGDLQLTKL (133 aa)).

In terms of biological role, does not bind lactose, and may not bind carbohydrates. This chain is Galectin-related protein (lgalsl), found in Xenopus tropicalis (Western clawed frog).